The primary structure comprises 221 residues: Small histidine-alanine-rich protein (221 aa).

Positions 1–21 are cleaved as a signal peptide; sequence MVSFSKNKILSAAVFASVLLL. Basic and acidic residues predominate over residues 52 to 67; sequence AHAGDAHHAHHVADAH. Disordered stretches follow at residues 52-141 and 180-221; these read AHAG…AANA and AHHD…HLHH. Repeat copies occupy residues 57-59 and 60-62. Residues 57–68 are 4 X 3 AA approximate tandem repeats of A-H-H; that stretch reads AHHAHHVADAHH. One copy of the 1-3; approximate repeat lies at 63 to 65; the sequence is VAD. Tandem repeats lie at residues 66–68, 69–74, 75–80, 81–86, 87–92, 93–98, 99–104, 105–110, 111–116, 117–122, 123–128, 129–134, and 135–140. The interval 69 to 146 is 13 X 6 AA approximate tandem repeats of A-H-H-A-A-N; that stretch reads AHHAANAHHA…HAANAHHAAD (78 aa). Low complexity predominate over residues 75-141; the sequence is AHHAANAHHA…AANAHHAANA (67 aa). The 2-13; approximate repeat unit spans residues 141-146; it reads AHHAAD. Repeat copies occupy residues 176–180, 181–185, 186–190, 191–195, 196–200, 201–205, and 206–210. Residues 176-210 are 7 X 5 AA tandem repeats of H-H-D-[DG]-A; it reads HHDDAHHDGAHHDDAHHDGAHHDGAHHDGAHHDGA. Residues 180–211 show a composition bias toward basic and acidic residues; the sequence is AHHDGAHHDDAHHDGAHHDGAHHDGAHHDGAH.

The polypeptide is Small histidine-alanine-rich protein (Plasmodium falciparum (isolate FC27 / Papua New Guinea)).